The sequence spans 599 residues: MGPKRRQLTFREKSRIIQEVEENPDLRKGEIARRFNIPPSTLSTILKNKRAILASERKYGVASTCRKTNKLSPYDKLEGLLIAWFQQIRAAGLPVKGIILKEKALRIAEELGMDDFTASNGWLDRFRRRHGVVACSGVTRSRARSSAPRAPAAPAGPATVPSEGSGGSTPGWHTREEQPPSVAEGYASQDVFSATETSLWYDFLSDQASGLWGGDGPARQATQRLSVLLCANADGSEKLPPLVAGKSAKPRAGQGGLPCDYTANSKGGVTTQALAKYLKALDTRMAAESRRVLLLAGRLAAQSLDTSGLRHVQLAFFPPGTVHPLERGVVQQVKGHYRQAMLLKAMAALEGQDPSGLQLGLVEALHFVAAAWQAVEPSDIATCFREAGFGGGLNATITTSFKSEGEEEEEEEEEEEEEEEEEGEGEEEEEEEEEGEEEGGEGEEEGEEEVEEEGEVDDSDEEEEESSSEGLEAEDWAQGVVEASGGFGGYSVQEEAQFPTLHFLEGGEDSDSDSDEEEDDEEEDEEDEDEEDDEDGDEVPVPSFGEAMAYFAMVKRYLTSFPIDDRVQSHILHLEHDLVHVTRKNHARQAGVRGLGHQS.

Glycine 2 carries the n,N,N-trimethylglycine modification. The HTH psq-type domain occupies glycine 2–isoleucine 52. DNA-binding regions (H-T-H motif) lie at residues lysine 28 to asparagine 48 and glycine 97 to arginine 129. The HTH CENPB-type domain occupies cysteine 65–serine 136. Positions alanine 143–alanine 183 are disordered. Over residues arginine 144–alanine 158 the composition is skewed to low complexity. A Phosphoserine modification is found at serine 165. Residue lysine 246 forms a Glycyl lysine isopeptide (Lys-Gly) (interchain with G-Cter in SUMO2) linkage. Disordered stretches follow at residues asparagine 394 to tryptophan 476 and phenylalanine 498 to serine 543. Residues threonine 396 and threonine 398 each carry the phosphothreonine modification. Composition is skewed to acidic residues over residues glycine 405–aspartate 475 and glycine 506–glutamate 538. A homodimerization region spans residues glycine 536–serine 599.

Antiparallel homodimer. Interacts with CENPT. Identified in a centromere complex containing histones H2A, H2B and H4, and at least CENPA, CENPB, CENPC, CENPT, CENPN, HJURP, SUPT16H, SSRP1 and RSF1. Poly-ADP-ribosylated by PARP1. Post-translationally, N-terminally methylated by METTL11A/NTM1. Alpha-N-methylation is stimulated in response to extracellular stimuli, including increased cell density and heat shock, and seems to facilitate binding to CENP-B boxes. Chromatin-bound CENP-B is primarily trimethylated.

The protein resides in the nucleus. The protein localises to the chromosome. It is found in the centromere. In terms of biological role, interacts with centromeric heterochromatin in chromosomes and binds to a specific 17 bp subset of alphoid satellite DNA, called the CENP-B box. May organize arrays of centromere satellite DNA into a higher-order structure which then directs centromere formation and kinetochore assembly in mammalian chromosomes. This chain is Major centromere autoantigen B (Cenpb), found in Mus musculus (Mouse).